A 419-amino-acid polypeptide reads, in one-letter code: MTTQLEQAWELAKQRFAAVGIDVEEALRQLDRLPVSMHCWQGDDVAGFENREGSLTGGIQSTGNYPGKARNATELRADLEQALRLIPGPKRLNLHAIYLESDTPVARDQIKPEHFKNWVEWAKANRLGLDFNPTCFSHPLSADGFTLSHPDAKIRQFWIDHCKASRRVSAYFGEQLGTPSVMNIWIPDGMKDITVDRLAPRQRLLEALDEVISEKFDPAHHIDAVESKLFGIGAESYTVGSNEFYMGYATSRQTALCLDAGHFHPTEVISDKISAAMLYVPRLLLHVSRPVRWDSDHVVLLDDETQAIASEIVRHNLFDRVHIGLDFFDASINRVAAWVIGTRNMKKALLRALLEPTDQLRQLEASGDYTVRLALLEEQKSLPWQAVWEMYCQRHDTPTGSQWLDSVRTYEKEILSKRS.

Mn(2+) is bound by residues His-262, Asp-294, and Asp-296.

The protein belongs to the rhamnose isomerase family. Homotetramer. Mn(2+) is required as a cofactor.

The protein localises to the cytoplasm. It carries out the reaction L-rhamnopyranose = L-rhamnulose. It functions in the pathway carbohydrate degradation; L-rhamnose degradation; glycerone phosphate from L-rhamnose: step 1/3. Catalyzes the interconversion of L-rhamnose and L-rhamnulose. The polypeptide is L-rhamnose isomerase (Salmonella gallinarum (strain 287/91 / NCTC 13346)).